We begin with the raw amino-acid sequence, 80 residues long: Small ribosomal subunit protein bS16 (80 aa).

It belongs to the bacterial ribosomal protein bS16 family.

This is Small ribosomal subunit protein bS16 from Nitrosococcus oceani (strain ATCC 19707 / BCRC 17464 / JCM 30415 / NCIMB 11848 / C-107).